The primary structure comprises 393 residues: NAD(P)H-quinone oxidoreductase subunit H, chloroplastic (393 aa).

It belongs to the complex I 49 kDa subunit family. As to quaternary structure, NDH is composed of at least 16 different subunits, 5 of which are encoded in the nucleus.

The protein resides in the plastid. It is found in the chloroplast thylakoid membrane. The catalysed reaction is a plastoquinone + NADH + (n+1) H(+)(in) = a plastoquinol + NAD(+) + n H(+)(out). The enzyme catalyses a plastoquinone + NADPH + (n+1) H(+)(in) = a plastoquinol + NADP(+) + n H(+)(out). In terms of biological role, NDH shuttles electrons from NAD(P)H:plastoquinone, via FMN and iron-sulfur (Fe-S) centers, to quinones in the photosynthetic chain and possibly in a chloroplast respiratory chain. The immediate electron acceptor for the enzyme in this species is believed to be plastoquinone. Couples the redox reaction to proton translocation, and thus conserves the redox energy in a proton gradient. The protein is NAD(P)H-quinone oxidoreductase subunit H, chloroplastic of Lepidium virginicum (Virginia pepperweed).